The sequence spans 1494 residues: MSLLGTINPNLNPARAVGAQGDAEGAAPVSGGEPMPIFEGNDSARTSDTALDKLGKDESKYDEQIAEAEVTRLAQQLTRQSTRFSVSQNAENPFLETKEDSTLNPLGPNFKAKNWMKNLLALTSRDPERHPRREAGVSFRNLSVHGYGSPTDYQKDVFNMVLQVGALFRAVTGTGKQKIQILRDFDGLVKSGEMLVVLGRPGSGCSTFLKTLAGEMNGIYMDDKSDLNYQGIPAKQMRRQFRGEAIYNAETDVHFPQLSVGDTLKFAALTRCPRNRFPGVSREQYATHMRDVVMAMLGLTHTINTRVGNDFVRGVSGGERKRVSIAEATLSGSPLQCWDNSTRGLDSANALEFCKTLNLMTKYAGATVAVAIYQASQSAYDVFDKVTVLYEGRQIYFGRTDEAKEFFTTMGFECPERQTTADFLTSLTSPSERIVKKGYEGKVPRTPDEFAAAWKNSEAYAKLIREIEEYNREFPLGGESVQKFVESRRAMQAKNQRVGSPYTVSIYEQVRLCMIRGFQRLKGDSSLTMSQLIGNFIMALIIGSVFYNLQHDTSSFYSRGALLFFAVLLNAFSSALEILTLYAQRPIVEKQARYAMYHPFAEAIASMLCDMPYKITNAIIFNITLYFMTNLRREPGPFFVFLLFTFVTTMTMSMLFRTIAASSRTLSQALVPAAILILGLVIYTGFTIPTRNMLGWSRWMNYLDPIAYGFESLMVNEFHNTKWKCSSAELIPNYEGASLANKICSTVGAVAGSEYVYGDDYLEQSFQYYESHKWRNLGIMFAFMVFFLATYLTATEYISEAKSKGEVLLFRRGHYSRGAADVETHNEVSATEKTNESSDGAGAAIQRQEAIFHWQDVCYDIKIKGEPRRILDHVDGWVKPGTCTALMGVSGAGKTTLLDVLATRVTMGVVTGEMLVDGRLRDQSFQRKTGYVQQQDLHLHTTTVREALRFSAILRQPAHVSRQEKLDYVEEVIKLLGMEAYADAVVGVPGEGLNVEQRKRLTIGVELAAKPQLLLFLDEPTSGLDSQTSWSILDLIDTLTKHGQAILCTIHQPSAMLFQRFDRLLFLAKGGKTVYFGEIGERSSTLASYFERNGAPKLPVEANPAEWMLEVIGAAPGSHSDIDWPAVWRESPEREAVRNHLAELKSTLSQKSVDSSHSDESSFKEFAAPFSVQLYECLVRVFSQYWRTPVYIYSKAVLCILTSLYIGFSFFHAENSRQGLQNQMFSIFMLMTIFGNLVQQIMPNFVTQRALYEARERPSKAYSWKAFMTANILVELPWNALMSVIIFVCWYYPIGLYRNAEPTDSVHERGALMWLLILSFLLFTSTFAHMMIAGIELAETGGNLANLLFSLCLIFCGVLATPETLPGFWIFMYRVSPFTYLVSGMLATGVGRTTAVCEKVEFLHLTPPANTTCYDYMSDYIGSFGGYLENDNATDSCSFCQISSTDTFLSAVSSYYEDRWRNFGIMWAFIVFNIAAAVFIYWLARVPKGSRSKN.

Positions 1–11 (MSLLGTINPNL) are enriched in polar residues. Disordered stretches follow at residues 1 to 48 (MSLL…RTSD) and 84 to 105 (FSVS…TLNP). A glycan (N-linked (GlcNAc...) asparagine) is linked at Asn-41. Asn-141 and Asn-340 each carry an N-linked (GlcNAc...) asparagine glycan. Residues 162 to 416 (LQVGALFRAV…FTTMGFECPE (255 aa)) enclose the ABC transporter 1 domain. The next 2 helical transmembrane spans lie at 527–547 (LTMS…SVFY) and 561–581 (ALLF…ILTL). The N-linked (GlcNAc...) asparagine glycan is linked to Asn-622. 3 consecutive transmembrane segments (helical) span residues 636-656 (GPFF…SMLF), 669-689 (ALVP…FTIP), and 778-798 (GIMF…TEYI). An N-linked (GlcNAc...) asparagine glycan is attached at Asn-835. The region spanning 852-1095 (FHWQDVCYDI…LASYFERNGA (244 aa)) is the ABC transporter 2 domain. 888 to 895 (GVSGAGKT) serves as a coordination point for ATP. 5 helical membrane passes run 1191 to 1211 (YIYS…FSFF), 1227 to 1247 (IFML…NFVT), 1276 to 1296 (LPWN…PIGL), 1312 to 1332 (LMWL…HMMI), and 1351 to 1371 (LCLI…FWIF). 2 N-linked (GlcNAc...) asparagine glycosylation sites follow: Asn-1410 and Asn-1432. The helical transmembrane segment at 1463-1483 (FGIMWAFIVFNIAAAVFIYWL) threads the bilayer.

Belongs to the ABC transporter superfamily. ABCG family. PDR (TC 3.A.1.205) subfamily.

Its subcellular location is the cell membrane. The enzyme catalyses (R)-miconazole(in) + ATP + H2O = (R)-miconazole(out) + ADP + phosphate + H(+). Functionally, pleiotropic ABC efflux transporter involved in the basal level of azole susceptibility. Confers resistance to miconazole and clotrimazole. In Aspergillus oryzae (strain ATCC 42149 / RIB 40) (Yellow koji mold), this protein is ABC multidrug transporter atrG.